Reading from the N-terminus, the 500-residue chain is NAD(P)H-quinone oxidoreductase chain 4, chloroplastic (500 aa).

The next 14 membrane-spanning stretches (helical) occupy residues 4–24 (FPWL…LFFL), 31–51 (LIKW…TYAF), 87–107 (IGPI…AWPV), 113–130 (LFHF…GSFS), 134–154 (LLLF…LLSM), 167–187 (FILY…GLGL), 208–228 (ALEI…SPII), 242–262 (HYST…YGLV), 272–292 (AHSI…IYAA), 305–325 (IAYS…SITD), 330–350 (GAIL…FLAG), 386–406 (LALP…GIIT), 416–436 (ILIT…SLSM), and 462–482 (LFVS…PDFV).

Belongs to the complex I subunit 4 family.

The protein resides in the plastid. It is found in the chloroplast thylakoid membrane. The catalysed reaction is a plastoquinone + NADH + (n+1) H(+)(in) = a plastoquinol + NAD(+) + n H(+)(out). It catalyses the reaction a plastoquinone + NADPH + (n+1) H(+)(in) = a plastoquinol + NADP(+) + n H(+)(out). This is NAD(P)H-quinone oxidoreductase chain 4, chloroplastic from Gossypium barbadense (Sea Island cotton).